The primary structure comprises 345 residues: Protease HtpX homolog (345 aa).

The next 2 helical transmembrane spans lie at Thr-6–Gly-26 and Ser-27–Asn-47. Residue His-130 coordinates Zn(2+). Glu-131 is an active-site residue. His-134 serves as a coordination point for Zn(2+). A run of 2 helical transmembrane segments spans residues Leu-145–Gly-165 and Ile-179–Ile-199. Glu-204 contributes to the Zn(2+) binding site.

It belongs to the peptidase M48B family. Zn(2+) is required as a cofactor.

It is found in the cell inner membrane. This chain is Protease HtpX homolog, found in Bartonella henselae (strain ATCC 49882 / DSM 28221 / CCUG 30454 / Houston 1) (Rochalimaea henselae).